The primary structure comprises 130 residues: Small ribosomal subunit protein uS9 (130 aa).

Belongs to the universal ribosomal protein uS9 family.

This is Small ribosomal subunit protein uS9 from Pseudomonas aeruginosa (strain LESB58).